Here is a 554-residue protein sequence, read N- to C-terminus: Probable efflux pump gsfJ (554 aa).

The next 14 helical transmembrane spans lie at 54–74 (LAAV…DNTI), 93–115 (SWYG…GKFY), 120–140 (IKVW…ICAV), 152–172 (AIAG…IGFA), 181–201 (LLGF…LIGG), 206–226 (KCFY…FLLF), 248–268 (LVGA…LQYG), 279–299 (VIGL…WEIY), 321–341 (IYMF…PIYF), 349–369 (PIGS…AAIV), 379–399 (IVPL…GLFY), 410–430 (WVGY…IAMS), 447–467 (IVNF…QCAF), and 518–538 (VFAI…FGSW).

The protein belongs to the major facilitator superfamily.

Its subcellular location is the membrane. Its function is as follows. Probable efflux pump; part of the gene cluster that mediates the biosynthesis of griseofulvin. This is Probable efflux pump gsfJ from Penicillium aethiopicum.